The following is a 529-amino-acid chain: DNA polymerase lambda (529 aa).

Residues 14-109 form the BRCT domain; sequence DPEGMFAGMV…EKANEDLYVL (96 aa). Residues 119-199 are disordered; sequence PKKSLPAISG…ESTSVYKPPD (81 aa). Residues 153 to 175 show a composition bias toward polar residues; sequence SHSNTQGSPDSPTSCSVPSTSAS. Residues 182–193 show a composition bias toward low complexity; the sequence is ETPTSPQSESTS. The tract at residues 213-227 is DNA-binding; that stretch reads NIYRALGEDRRSFSY. The active site involves H260. Residues 295 to 298 are DNA-binding; sequence GPAT. DCTP-binding positions include R336, 367–370, and 376–379; these read SYRR and GDLD. An involved in primer binding region spans residues 370–379; sequence RGKATCGDLD. Mn(2+) is bound by residues D377, D379, and D444. The segment at 418–459 is DNA-binding; that stretch reads EEGTDSGVDTYFGLCTYPGQELRRRIDFKVYPRDIYSFGLIA. N467 lines the dCTP pocket.

The protein belongs to the DNA polymerase type-X family. In terms of assembly, interacts with the DNA repair proteins XRCC4 and LIG4. Interacts with HSP90-1. Mn(2+) serves as cofactor.

Its subcellular location is the nucleus. The catalysed reaction is DNA(n) + a 2'-deoxyribonucleoside 5'-triphosphate = DNA(n+1) + diphosphate. In terms of biological role, repair polymerase involved in base excision repair (BER) and responsible for repair of lesions that give rise to abasic (AP) sites in DNA. Has both DNA polymerase and terminal transferase activities. Has a 5'-deoxyribose-5-phosphate lyase (dRP lyase) activity. Involved in the repair of transposon-induced DNA double strand breaks (DSBs). Involved in repair of UV-B-mediated DNA damage during seedling development through an excision repair mechanism. Involved the repair of DSBs induced by high salinity and DNA cross-linking agent. Functions via the DNA non-homologous end joining (NHEJ) pathway. This Arabidopsis thaliana (Mouse-ear cress) protein is DNA polymerase lambda.